Reading from the N-terminus, the 284-residue chain is Ribosomal RNA small subunit methyltransferase A (284 aa).

6 residues coordinate S-adenosyl-L-methionine: histidine 12, leucine 14, glycine 47, glutamate 68, aspartate 93, and asparagine 118.

The protein belongs to the class I-like SAM-binding methyltransferase superfamily. rRNA adenine N(6)-methyltransferase family. RsmA subfamily.

The protein resides in the cytoplasm. The enzyme catalyses adenosine(1518)/adenosine(1519) in 16S rRNA + 4 S-adenosyl-L-methionine = N(6)-dimethyladenosine(1518)/N(6)-dimethyladenosine(1519) in 16S rRNA + 4 S-adenosyl-L-homocysteine + 4 H(+). Its function is as follows. Specifically dimethylates two adjacent adenosines (A1518 and A1519) in the loop of a conserved hairpin near the 3'-end of 16S rRNA in the 30S particle. May play a critical role in biogenesis of 30S subunits. The chain is Ribosomal RNA small subunit methyltransferase A from Synechocystis sp. (strain ATCC 27184 / PCC 6803 / Kazusa).